The chain runs to 343 residues: tRNA N6-adenosine threonylcarbamoyltransferase (343 aa).

2 residues coordinate Fe cation: histidine 111 and histidine 115. Substrate contacts are provided by residues 134-138 (LVSGG), aspartate 167, glycine 180, and asparagine 276. Aspartate 304 lines the Fe cation pocket.

This sequence belongs to the KAE1 / TsaD family. It depends on Fe(2+) as a cofactor.

It localises to the cytoplasm. It carries out the reaction L-threonylcarbamoyladenylate + adenosine(37) in tRNA = N(6)-L-threonylcarbamoyladenosine(37) in tRNA + AMP + H(+). Required for the formation of a threonylcarbamoyl group on adenosine at position 37 (t(6)A37) in tRNAs that read codons beginning with adenine. Is involved in the transfer of the threonylcarbamoyl moiety of threonylcarbamoyl-AMP (TC-AMP) to the N6 group of A37, together with TsaE and TsaB. TsaD likely plays a direct catalytic role in this reaction. The sequence is that of tRNA N6-adenosine threonylcarbamoyltransferase from Hahella chejuensis (strain KCTC 2396).